Here is a 263-residue protein sequence, read N- to C-terminus: MAYSACFLHQSALASSAARSSSSSSSQRHVSLSKPVQIICKAQQSHEDDNSAVSRRLALTLLVGAAAVGSKVSPADAAYGEAANVFGKPKTNTDFLPYNGDGFKVQVPAKWNPSKEIEYPGQVLRFEDNFDATSNLNVMVTPTDKKSITDYGSPEEFLSQVNYLLGKQAYFGETASEGGFDNNAVATANILESSSQEVGGKPYYYLSVLTRTADGDEGGKHQLITATVNGGKLYICKAQAGDKRWFKGARKFVESAATSFSVA.

Phosphoserine is present on Ser153.

The protein belongs to the PsbP family. As to quaternary structure, interacts with WAK1.

Its subcellular location is the plastid. The protein localises to the chloroplast thylakoid lumen. Functionally, may be involved in the regulation of photosystem II. This chain is Oxygen-evolving enhancer protein 2-1, chloroplastic (PSBP1), found in Arabidopsis thaliana (Mouse-ear cress).